We begin with the raw amino-acid sequence, 103 residues long: Ghrelin (103 aa).

An N-terminal signal peptide occupies residues 1 to 26 (MPLRRRASHMFVLLCALSLCVESVKG). Residues 27–51 (GTSFLSPAQKPQGRRPPRMGRRDVA) are disordered. S29 carries O-decanoyl serine; alternate lipidation. S29 is lipidated: O-hexanoyl serine; alternate. Residue S29 is the site of O-octanoyl serine; alternate attachment. At Q38 the chain carries Glutamine amide. At M45 the chain carries Methionine amide. Positions 49–103 (DVAEPEIPVIKEDDQFMMSAPFELSVSLSEAEYEKYGPVLQKVLVNLLGDSPLEF) are cleaved as a propeptide — removed in mature form.

The protein belongs to the motilin family. O-octanoylated by GOAT/MBOAT4. O-octanoylation or O-decanoylation is essential for activity. The O-decanoylated form differs in the length of the carbon backbone of the carboxylic acid forming an ester bond with Ser-29. As to expression, expressed in the telencephalon, hypothalamus, pituitary, intestine, liver, spleen and gill, with expression strongest in the intestine.

It localises to the secreted. Functionally, ligand for growth hormone secretagogue receptor type 1 (GHSR). Induces the release of growth hormone from the pituitary. Induces adiposity and stimulates gastric acid secretion. Involved in growth regulation. Has an appetite-stimulating effect. The chain is Ghrelin (ghrl) from Carassius auratus (Goldfish).